Reading from the N-terminus, the 511-residue chain is 2,3-bisphosphoglycerate-independent phosphoglycerate mutase (511 aa).

Mn(2+) is bound by residues Asp12 and Ser62. Ser62 acts as the Phosphoserine intermediate in catalysis. Substrate contacts are provided by residues His123, 153–154, Arg185, Arg191, 260–263, and Lys333; these read RD and RPDR. The Mn(2+) site is built by Asp400, His404, Asp441, His442, and His460.

It belongs to the BPG-independent phosphoglycerate mutase family. In terms of assembly, monomer. The cofactor is Mn(2+).

The enzyme catalyses (2R)-2-phosphoglycerate = (2R)-3-phosphoglycerate. The protein operates within carbohydrate degradation; glycolysis; pyruvate from D-glyceraldehyde 3-phosphate: step 3/5. In terms of biological role, catalyzes the interconversion of 2-phosphoglycerate and 3-phosphoglycerate. In Clostridium novyi (strain NT), this protein is 2,3-bisphosphoglycerate-independent phosphoglycerate mutase.